A 353-amino-acid polypeptide reads, in one-letter code: Putative actin-28 (353 aa).

It belongs to the actin family.

It is found in the cytoplasm. The protein localises to the cytoskeleton. The enzyme catalyses ATP + H2O = ADP + phosphate + H(+). In terms of biological role, actins are highly conserved proteins that are involved in various types of cell motility and are ubiquitously expressed in all eukaryotic cells. Multiple isoforms are involved in various cellular functions such as cytoskeleton structure, cell mobility, chromosome movement and muscle contraction. This Dictyostelium discoideum (Social amoeba) protein is Putative actin-28 (act28).